The chain runs to 143 residues: Ribonuclease H (143 aa).

An RNase H type-1 domain is found at 1-141 (MKHVEIFTDG…VDKLASDAAL (141 aa)). Mg(2+)-binding residues include aspartate 9, glutamate 47, aspartate 69, and aspartate 133.

This sequence belongs to the RNase H family. Monomer. Mg(2+) is required as a cofactor.

The protein localises to the cytoplasm. It catalyses the reaction Endonucleolytic cleavage to 5'-phosphomonoester.. Endonuclease that specifically degrades the RNA of RNA-DNA hybrids. The protein is Ribonuclease H of Novosphingobium aromaticivorans (strain ATCC 700278 / DSM 12444 / CCUG 56034 / CIP 105152 / NBRC 16084 / F199).